The following is a 115-amino-acid chain: MHEMGIAMQIVEIAGGAIPSGIENPSVAKVNIRVGKLTAVVPTSLTFCFNIATQDTPLAGAELVIEEVPVVARCKQCGHEWIITGPDFSCETCRAGEVDILSGRELDIVSIELKE.

His2 contacts Ni(2+). Residues Cys74, Cys77, Cys90, and Cys93 each coordinate Zn(2+).

This sequence belongs to the HypA/HybF family.

Functionally, involved in the maturation of [NiFe] hydrogenases. Required for nickel insertion into the metal center of the hydrogenase. The protein is Hydrogenase maturation factor HypA of Desulfosudis oleivorans (strain DSM 6200 / JCM 39069 / Hxd3) (Desulfococcus oleovorans).